Reading from the N-terminus, the 300-residue chain is Iron-dependent extradiol dioxygenase (300 aa).

2 VOC domains span residues 5 to 120 and 142 to 270; these read SLAY…AFHG and GLGH…FGCE. His145 is a binding site for Fe cation. His200, His215, Asp250, and Tyr256 together coordinate substrate. A Fe cation-binding site is contributed by His215. Position 266 (Glu266) interacts with Fe cation.

This sequence belongs to the extradiol ring-cleavage dioxygenase family. As to quaternary structure, homodimer. Fe(2+) is required as a cofactor.

The enzyme catalyses 3,4-dihydroxy-9,10-secoandrosta-1,3,5(10)-triene-9,17-dione + O2 = (1E,2Z)-3-hydroxy-5,9,17-trioxo-4,5:9,10-disecoandrosta-1(10),2-dien-4-oate + H(+). It participates in steroid metabolism; cholesterol metabolism. Functionally, catalyzes the meta-cleavage of 3,4-dihydroxy-9,10-seconandrost-1,3,5(10)-triene-9,17-dione (3,4-DHSA) to produce 4,5-9,10-diseco-3-hydroxy-5,9,17-trioxoandrosta-1(10),2-diene-4-oic acid (4,9-DSHA). Also involved in biphenyl and polychlorinated biphenyls (PCBs) degradation. The sequence is that of Iron-dependent extradiol dioxygenase (hsaC) from Rhodococcus jostii (strain RHA1).